Here is a 116-residue protein sequence, read N- to C-terminus: Nicotine metabolites export pump subunit NepA (116 aa).

Helical transmembrane passes span 10–30, 42–62, 67–87, and 92–112; these read LTIW…TSLL, TVAV…ILKF, IAYA…GVLF, and FSWK…TLNL.

Belongs to the drug/metabolite transporter (DMT) superfamily. Small multidrug resistance (SMR) (TC 2.A.7.1) family. NepA/NepB subfamily. In terms of assembly, the efflux pump is composed of NepA and NepB.

The protein resides in the cell membrane. Functionally, component of an efflux pump responsible for the transport of nicotine breakdown products, in particular methylamine, out of the cell. This pump apparently serves as a metabolic valve for nicotine catabolites and may protect the bacteria from the potentially toxic side effects of these compounds. The protein is Nicotine metabolites export pump subunit NepA (nepA) of Paenarthrobacter nicotinovorans (Arthrobacter nicotinovorans).